A 206-amino-acid polypeptide reads, in one-letter code: Dephospho-CoA kinase (206 aa).

The 197-residue stretch at 4 to 200 (TVALTGGIGS…ASYLKLASQF (197 aa)) folds into the DPCK domain. Position 12–17 (12–17 (GSGKST)) interacts with ATP.

This sequence belongs to the CoaE family.

Its subcellular location is the cytoplasm. It carries out the reaction 3'-dephospho-CoA + ATP = ADP + CoA + H(+). The protein operates within cofactor biosynthesis; coenzyme A biosynthesis; CoA from (R)-pantothenate: step 5/5. Its function is as follows. Catalyzes the phosphorylation of the 3'-hydroxyl group of dephosphocoenzyme A to form coenzyme A. The chain is Dephospho-CoA kinase from Salmonella typhimurium (strain LT2 / SGSC1412 / ATCC 700720).